Reading from the N-terminus, the 491-residue chain is Cytosolic Fe-S cluster assembly factor NAR1 (491 aa).

Positions 20, 59, 62, 65, 177, 231, 412, and 416 each coordinate [4Fe-4S] cluster.

The protein belongs to the NARF family. Interacts with CIA1.

Functionally, component of the cytosolic Fe/S protein assembly machinery. Required for maturation of extramitochondrial Fe/S proteins. May play a role in the transfer of pre-assembled Fe/S clusters to target apoproteins. The protein is Cytosolic Fe-S cluster assembly factor NAR1 (NAR1) of Saccharomyces cerevisiae (strain YJM789) (Baker's yeast).